The chain runs to 579 residues: Membrane protein insertase YidC (579 aa).

A helical membrane pass occupies residues 10 to 30 (LVIVTILSALILFGWSFVTKH). Positions 35–61 (PPAPTQQGKNQPKAELTAEESGDKPLK) are disordered. 5 consecutive transmembrane segments (helical) span residues 330–350 (FDKA…FYYL), 351–371 (DWLF…VFTI), 423–443 (VNPF…IALY), 478–498 (LLHF…ILGI), and 523–543 (PLIS…YYIF). A compositionally biased stretch (basic and acidic residues) spans 560–572 (STPEERQDRAERK). Residues 560–579 (STPEERQDRAERKRPSKKKA) form a disordered region.

Belongs to the OXA1/ALB3/YidC family. Type 1 subfamily. In terms of assembly, interacts with the Sec translocase complex via SecD. Specifically interacts with transmembrane segments of nascent integral membrane proteins during membrane integration.

Its subcellular location is the cell inner membrane. Required for the insertion and/or proper folding and/or complex formation of integral membrane proteins into the membrane. Involved in integration of membrane proteins that insert both dependently and independently of the Sec translocase complex, as well as at least some lipoproteins. Aids folding of multispanning membrane proteins. This Zymomonas mobilis subsp. mobilis (strain ATCC 31821 / ZM4 / CP4) protein is Membrane protein insertase YidC.